We begin with the raw amino-acid sequence, 442 residues long: Elongation factor 1-gamma (442 aa).

One can recognise a GST N-terminal domain in the interval 2 to 87 (AAGTLYTYPE…YLSNDVLRGS (86 aa)). The GST C-terminal domain occupies 88–216 (TPQASAQVLQ…VKLCEKMAQF (129 aa)). Composition is skewed to basic and acidic residues over residues 227 to 242 (KKEAPIKKEKGGKEGG) and 249 to 263 (QEKKEKKKEEKKAAP). A disordered region spans residues 227 to 273 (KKEAPIKKEKGGKEGGKQQPQQQEKKEKKKEEKKAAPAEEEMDECEA). An EF-1-gamma C-terminal domain is found at 281 to 442 (AKDPFAHLPK…KPFNQGKIFK (162 aa)).

As to quaternary structure, EF-1 is composed of four subunits: alpha, beta, delta, and gamma.

In terms of biological role, probably plays a role in anchoring the complex to other cellular components. This chain is Elongation factor 1-gamma (eef1g), found in Danio rerio (Zebrafish).